A 199-amino-acid polypeptide reads, in one-letter code: Small ribosomal subunit protein uS4 (199 aa).

Residues 91 to 154 (SRLDNVVYRL…KDLIIVKEAL (64 aa)) form the S4 RNA-binding domain.

Belongs to the universal ribosomal protein uS4 family. In terms of assembly, part of the 30S ribosomal subunit. Contacts protein S5. The interaction surface between S4 and S5 is involved in control of translational fidelity.

In terms of biological role, one of the primary rRNA binding proteins, it binds directly to 16S rRNA where it nucleates assembly of the body of the 30S subunit. With S5 and S12 plays an important role in translational accuracy. This Phytoplasma mali (strain AT) protein is Small ribosomal subunit protein uS4.